A 298-amino-acid chain; its full sequence is Protoheme IX farnesyltransferase (298 aa).

Transmembrane regions (helical) follow at residues 28–48 (VVALLLLTAVVGMCLATEELV), 50–70 (LKVLVPALTGIGLMSAAAAAI), 95–117 (LSPAKVTTFAASIGVIGFVTLYA), 121–138 (PLTAWLTFASMVGYAVVY), 149–169 (NIVIGGLAGAAPPLLGWTSVT), 176–196 (AVLLVMIIFTWTPPHFWALAV), 222–242 (CIFLYTVLLTVVCLMPFLIGM), 243–263 (TGMIYLVGVSVLNAIFLAYAW), and 274–294 (AFNMFAFSIWHLMLLFVILLV).

It belongs to the UbiA prenyltransferase family. Protoheme IX farnesyltransferase subfamily.

The protein resides in the cell inner membrane. It carries out the reaction heme b + (2E,6E)-farnesyl diphosphate + H2O = Fe(II)-heme o + diphosphate. Its pathway is porphyrin-containing compound metabolism; heme O biosynthesis; heme O from protoheme: step 1/1. Its function is as follows. Converts heme B (protoheme IX) to heme O by substitution of the vinyl group on carbon 2 of heme B porphyrin ring with a hydroxyethyl farnesyl side group. This chain is Protoheme IX farnesyltransferase, found in Idiomarina loihiensis (strain ATCC BAA-735 / DSM 15497 / L2-TR).